The chain runs to 274 residues: Diaminopimelate epimerase (274 aa).

Residues N11, Q44, and N64 each coordinate substrate. C73 functions as the Proton donor in the catalytic mechanism. Substrate contacts are provided by residues 74-75 (GN), N157, N190, and 208-209 (ER). The active-site Proton acceptor is C217. 218 to 219 (GS) serves as a coordination point for substrate.

Belongs to the diaminopimelate epimerase family. In terms of assembly, homodimer.

It localises to the cytoplasm. The enzyme catalyses (2S,6S)-2,6-diaminopimelate = meso-2,6-diaminopimelate. Its pathway is amino-acid biosynthesis; L-lysine biosynthesis via DAP pathway; DL-2,6-diaminopimelate from LL-2,6-diaminopimelate: step 1/1. In terms of biological role, catalyzes the stereoinversion of LL-2,6-diaminopimelate (L,L-DAP) to meso-diaminopimelate (meso-DAP), a precursor of L-lysine and an essential component of the bacterial peptidoglycan. The chain is Diaminopimelate epimerase from Pectobacterium atrosepticum (strain SCRI 1043 / ATCC BAA-672) (Erwinia carotovora subsp. atroseptica).